The following is a 307-amino-acid chain: Ornithine carbamoyltransferase (307 aa).

Carbamoyl phosphate-binding positions include 50–53 (STRT), Q77, R101, and 128–131 (HPCQ). L-ornithine-binding positions include N160, D224, and 228–229 (SM). Residues 264–265 (CL) and R292 each bind carbamoyl phosphate.

This sequence belongs to the aspartate/ornithine carbamoyltransferase superfamily. OTCase family.

The protein localises to the cytoplasm. The enzyme catalyses carbamoyl phosphate + L-ornithine = L-citrulline + phosphate + H(+). The protein operates within amino-acid biosynthesis; L-arginine biosynthesis; L-arginine from L-ornithine and carbamoyl phosphate: step 1/3. In terms of biological role, reversibly catalyzes the transfer of the carbamoyl group from carbamoyl phosphate (CP) to the N(epsilon) atom of ornithine (ORN) to produce L-citrulline. The sequence is that of Ornithine carbamoyltransferase from Clavibacter michiganensis subsp. michiganensis (strain NCPPB 382).